A 209-amino-acid polypeptide reads, in one-letter code: Kynurenine formamidase (209 aa).

Position 19 (Trp-19) interacts with substrate. Zn(2+)-binding residues include His-49, His-53, and Asp-55. His-59 serves as the catalytic Proton donor/acceptor. Zn(2+) is bound by residues His-160 and Glu-172.

This sequence belongs to the Cyclase 1 superfamily. KynB family. As to quaternary structure, homodimer. The cofactor is Zn(2+).

The enzyme catalyses N-formyl-L-kynurenine + H2O = L-kynurenine + formate + H(+). It participates in amino-acid degradation; L-tryptophan degradation via kynurenine pathway; L-kynurenine from L-tryptophan: step 2/2. Functionally, catalyzes the hydrolysis of N-formyl-L-kynurenine to L-kynurenine, the second step in the kynurenine pathway of tryptophan degradation. The chain is Kynurenine formamidase from Ralstonia pickettii (strain 12J).